A 77-amino-acid polypeptide reads, in one-letter code: Secapin-2 (77 aa).

The first 32 residues, 1–32, serve as a signal peptide directing secretion; the sequence is MKNYSKNATYLITVLLFSFVTMLLIIPSKCEA. A propeptide spanning residues 33–52 is cleaved from the precursor; it reads VSNDMQPLEARTADLVQQPR. An intrachain disulfide couples Cys-61 to Cys-72. A Proline amide modification is found at Pro-77.

It belongs to the secapin family. In terms of tissue distribution, expressed by the venom gland.

The protein localises to the secreted. Serine protease inhibitor which exhibits antifibrinolytic, antielastolytic and antimicrobial activities. Displays antimicrobial activity against bacteria and fungi. Likely functions in the innate immune response to microbial infection and possibly in the venom, as an antifibrinolytic agent. Induces hyperalgesia and edema mediated by leukotrienes when injected into mice. Does not induce hemolytic activity, mast cell degranulation, or chemotactic activity for polymorphonucleated leukocytes (PMNL). The protein is Secapin-2 of Apis mellifera (Honeybee).